We begin with the raw amino-acid sequence, 418 residues long: Tyrosine--tRNA ligase (418 aa).

Tyrosine 34 lines the L-tyrosine pocket. The 'HIGH' region motif lies at 39 to 48; sequence PTADSLHLGH. Residues tyrosine 169 and glutamine 173 each contribute to the L-tyrosine site. The 'KMSKS' region signature appears at 229-233; sequence KFGKS. Lysine 232 serves as a coordination point for ATP. The S4 RNA-binding domain maps to 352 to 418; sequence LNLVDMLVTA…GKKKYAVLTY (67 aa).

This sequence belongs to the class-I aminoacyl-tRNA synthetase family. TyrS type 1 subfamily. Homodimer.

The protein localises to the cytoplasm. The enzyme catalyses tRNA(Tyr) + L-tyrosine + ATP = L-tyrosyl-tRNA(Tyr) + AMP + diphosphate + H(+). In terms of biological role, catalyzes the attachment of tyrosine to tRNA(Tyr) in a two-step reaction: tyrosine is first activated by ATP to form Tyr-AMP and then transferred to the acceptor end of tRNA(Tyr). This Streptococcus pyogenes serotype M5 (strain Manfredo) protein is Tyrosine--tRNA ligase.